Here is a 1016-residue protein sequence, read N- to C-terminus: Protein kinase C-like 2 (1016 aa).

Residues 1–68 (MDMIDEAITE…LEKLKLRKNG (68 aa)) enclose the REM-1 1 domain. Residues 68–101 (GVRKSNSEKPSVGIEKNPSFSTTKSAKSFSSTSS) are disordered. Over residues 86–101 (SFSTTKSAKSFSSTSS) the composition is skewed to low complexity. Residues 111–188 (NYDTPLTISK…LKRYHDLHIE (78 aa)) form the REM-1 2 domain. The C2 domain maps to 195 to 307 (PSTESRGNLN…VEKQRRKKVE (113 aa)). 2 Phorbol-ester/DAG-type zinc fingers span residues 405–453 (GHKF…VTKC) and 473–523 (PHHF…PDFC). The segment at 543–602 (YKAQQHKQKSSHHKHHHHKKSKSSSSKHKENDKASVSITTTTTPSITPADPVPTSPKPLA) is disordered. The span at 546 to 568 (QQHKQKSSHHKHHHHKKSKSSSS) shows a compositional bias: basic residues. Residues 579–590 (SITTTTTPSITP) are compositionally biased toward low complexity. Residues 683-942 (FTFLSVLGKG…AEDVMTHPFF (260 aa)) enclose the Protein kinase domain. Residues 689 to 697 (LGKGNFGKV) and K712 contribute to the ATP site. D808 serves as the catalytic Proton acceptor. Positions 943-1013 (SNINWDDIYH…SCEDDKPSTT (71 aa)) constitute an AGC-kinase C-terminal domain. At T984 the chain carries Phosphothreonine.

Belongs to the protein kinase superfamily. AGC Ser/Thr protein kinase family. PKC subfamily. As to quaternary structure, interacts with rho2.

It carries out the reaction L-seryl-[protein] + ATP = O-phospho-L-seryl-[protein] + ADP + H(+). It catalyses the reaction L-threonyl-[protein] + ATP = O-phospho-L-threonyl-[protein] + ADP + H(+). Its function is as follows. Involved in the control of the cell shape. Target of the inhibitor staurosporine. This Schizosaccharomyces pombe (strain 972 / ATCC 24843) (Fission yeast) protein is Protein kinase C-like 2 (pck2).